The following is a 58-amino-acid chain: Small ribosomal subunit protein bS21C (58 aa).

Residues 38-58 (YEKPSLRRKRKAEAARKGGRY) form a disordered region. A compositionally biased stretch (basic and acidic residues) spans 49 to 58 (AEAARKGGRY).

The protein belongs to the bacterial ribosomal protein bS21 family.

The polypeptide is Small ribosomal subunit protein bS21C (rpsU3) (Nostoc sp. (strain PCC 7120 / SAG 25.82 / UTEX 2576)).